The sequence spans 292 residues: Poly(U)-specific endoribonuclease-A (292 aa).

Positions 8-285 constitute an EndoU domain; that stretch reads LNHELSKLFN…IGTAYPVLLS (278 aa). Active-site residues include His-162, His-178, and Lys-224.

It belongs to the ENDOU family. As to quaternary structure, monomer. Mn(2+) serves as cofactor.

The protein resides in the nucleus. It catalyses the reaction uridylyl-uridylyl-ribonucleotide-RNA = a 3'-end uridylyl-2',3'-cyclophospho-uridine-RNA + a 5'-end dephospho-ribonucleoside-RNA. Poly(U)-specific endoribonuclease involved in the processing of intron-encoded box C/D snoRNAs, such as U16 and U86. Releases products that have 2',3'-cyclic phosphate termini at the 3'-end. The polypeptide is Poly(U)-specific endoribonuclease-A (endou-a) (Xenopus laevis (African clawed frog)).